The following is a 58-amino-acid chain: T-cell receptor gamma alternate reading frame protein (58 aa).

As to expression, detected at low levels in the ductal cells of the salivary gland but not in the acinar cells (at protein level). Expressed in endometrium (at protein level). Expressed in epithelial cells within the acinar ducts of the prostate.

This chain is T-cell receptor gamma alternate reading frame protein, found in Homo sapiens (Human).